Here is a 110-residue protein sequence, read N- to C-terminus: Small ribosomal subunit protein eS24 (110 aa).

The tract at residues 91–110 is disordered; that stretch reads RNKVEEQAEEAEEAEAGAAE. Over residues 97 to 110 the composition is skewed to acidic residues; sequence QAEEAEEAEAGAAE.

The protein belongs to the eukaryotic ribosomal protein eS24 family.

The chain is Small ribosomal subunit protein eS24 from Archaeoglobus fulgidus (strain ATCC 49558 / DSM 4304 / JCM 9628 / NBRC 100126 / VC-16).